The sequence spans 458 residues: 3-isopropylmalate dehydratase large subunit (458 aa).

Residues Cys-339, Cys-399, and Cys-402 each coordinate [4Fe-4S] cluster.

The protein belongs to the aconitase/IPM isomerase family. LeuC type 1 subfamily. Heterodimer of LeuC and LeuD. [4Fe-4S] cluster serves as cofactor.

The enzyme catalyses (2R,3S)-3-isopropylmalate = (2S)-2-isopropylmalate. The protein operates within amino-acid biosynthesis; L-leucine biosynthesis; L-leucine from 3-methyl-2-oxobutanoate: step 2/4. Its function is as follows. Catalyzes the isomerization between 2-isopropylmalate and 3-isopropylmalate, via the formation of 2-isopropylmaleate. This is 3-isopropylmalate dehydratase large subunit from Lactococcus lactis subsp. cremoris (strain SK11).